Reading from the N-terminus, the 328-residue chain is G2/mitotic-specific cyclin-2 (328 aa).

The protein belongs to the cyclin family. Cyclin AB subfamily. Interacts with the CDC2 protein kinase to form a serine/threonine kinase holoenzyme complex also known as maturation promoting factor (MPF). The cyclin subunit imparts substrate specificity to the complex. Only expressed in organs with dividing cells.

Functionally, essential for the control of the cell cycle at the G2/M (mitosis) transition. In Medicago sativa (Alfalfa), this protein is G2/mitotic-specific cyclin-2.